The chain runs to 127 residues: Aspartate 1-decarboxylase (127 aa).

S25 (schiff-base intermediate with substrate; via pyruvic acid) is an active-site residue. S25 carries the post-translational modification Pyruvic acid (Ser). T57 serves as a coordination point for substrate. The Proton donor role is filled by Y58. 73–75 (GAA) serves as a coordination point for substrate.

This sequence belongs to the PanD family. Heterooctamer of four alpha and four beta subunits. Requires pyruvate as cofactor. Post-translationally, is synthesized initially as an inactive proenzyme, which is activated by self-cleavage at a specific serine bond to produce a beta-subunit with a hydroxyl group at its C-terminus and an alpha-subunit with a pyruvoyl group at its N-terminus.

It is found in the cytoplasm. It carries out the reaction L-aspartate + H(+) = beta-alanine + CO2. It functions in the pathway cofactor biosynthesis; (R)-pantothenate biosynthesis; beta-alanine from L-aspartate: step 1/1. Functionally, catalyzes the pyruvoyl-dependent decarboxylation of aspartate to produce beta-alanine. The sequence is that of Aspartate 1-decarboxylase from Aliarcobacter butzleri (strain RM4018) (Arcobacter butzleri).